The chain runs to 437 residues: Transcription factor AP-2-alpha (437 aa).

A Glycyl lysine isopeptide (Lys-Gly) (interchain with G-Cter in SUMO); alternate cross-link involves residue Lys10. Residue Lys10 forms a Glycyl lysine isopeptide (Lys-Gly) (interchain with G-Cter in SUMO2); alternate linkage. The disordered stretch occupies residues 14-107 (CEDRHDGASN…GQRQSQESGL (94 aa)). The PPxY motif motif lies at 57-62 (YFPPPY). 2 stretches are compositionally biased toward low complexity: residues 65 to 74 (IYPQSQDPYS) and 88 to 101 (QPQPQHPGWPGQRQ). Glycyl lysine isopeptide (Lys-Gly) (interchain with G-Cter in SUMO2) cross-links involve residues Lys177 and Lys184. A Phosphoserine; by PKA modification is found at Ser239. The interval 280 to 410 (RRKAANVTLL…YLTEALKAMD (131 aa)) is H-S-H (helix-span-helix), dimerization. The span at 414 to 427 (LSNNPNSHTDNNAK) shows a compositional bias: polar residues. The disordered stretch occupies residues 414-437 (LSNNPNSHTDNNAKSSDKEEKHRK). Residues 428–437 (SSDKEEKHRK) are compositionally biased toward basic and acidic residues.

It belongs to the AP-2 family. In terms of assembly, binds DNA as a dimer. Can form homodimers or heterodimers with other AP-2 family members. Interacts with WWOX. Interacts with CITED4. Interacts with UBE2I. Interacts with RALBP1 in a complex also containing EPN1 and NUMB during interphase and mitosis. Interacts with KCTD1; this interaction represses transcription activation. Interacts (via C-terminus) with CITED2 (via C-terminus); the interaction stimulates TFAP2A-transcriptional activation. Interacts (via N-terminus) with EP300 (via N-terminus); the interaction requires CITED2. Interacts with KCTD15; this interaction inhibits TFAP2A transcriptional activation. In terms of processing, sumoylated on Lys-10; which inhibits transcriptional activity.

Its subcellular location is the nucleus. In terms of biological role, sequence-specific DNA-binding protein that interacts with inducible viral and cellular enhancer elements to regulate transcription of selected genes. AP-2 factors bind to the consensus sequence 5'-GCCNNNGGC-3' and activate genes involved in a large spectrum of important biological functions including proper eye, face, body wall, limb and neural tube development. They also suppress a number of genes including MCAM/MUC18, C/EBP alpha and MYC. AP-2-alpha is the only AP-2 protein required for early morphogenesis of the lens vesicle. Together with the CITED2 coactivator, stimulates the PITX2 P1 promoter transcription activation. Associates with chromatin to the PITX2 P1 promoter region. The protein is Transcription factor AP-2-alpha (TFAP2A) of Bos taurus (Bovine).